Consider the following 553-residue polypeptide: MAFEDVAVYFSQEEWGLLDTAQRALYRRVMLDNFALVASLGLSTSRPRVVIQLERGEEPWVPSGTDTTLSRTTYRRRNPGSWSLTEDRDVSGEWPRAFPDTPPGMTTSVFPVAGACHSVKSLQRQRGASPSRERKPTGVSVIYWERLLLGSGSGQASVSLRLTSPLRPPEGVRLREKTLTEHALLGRQPRTPERQKPCAQEVPGRTFGSAQDLEAAGGRGHHRMGAVWQEPHRLLGGQEPSTWDELGEALHAGEKSFECRACSKVFVKSSDLLKHLRTHTGERPYECAQCGKAFSQTSHLTQHQRIHSGETPYACPVCGKAFRHSSSLVRHQRIHTAEKSFRCSECGKAFSHGSNLSQHRKIHAGGRPYACAQCGRRFCRNSHLIQHERTHTGEKPFVCALCGAAFSQGSSLFKHQRVHTGEKPFACPQCGRAFSHSSNLTQHQLLHTGERPFRCVDCGKAFAKGAVLLSHRRIHTGEKPFVCTQCGRAFRERPALFHHQRIHTGEKTVRRSRASLHPQARSVAGASSEGAPAKETEPTPASGPAAVSQPAEV.

The KRAB domain maps to 1-72; sequence MAFEDVAVYF…SGTDTTLSRT (72 aa). The Nuclear localization signal motif lies at 130 to 135; that stretch reads PSRERK. The segment at 186–221 is disordered; that stretch reads GRQPRTPERQKPCAQEVPGRTFGSAQDLEAAGGRGH. 9 consecutive C2H2-type zinc fingers follow at residues 257-279, 285-307, 313-335, 341-363, 369-391, 397-419, 425-447, 453-475, and 481-503; these read FECR…LRTH, YECA…QRIH, YACP…QRIH, FRCS…RKIH, YACA…ERTH, FVCA…QRVH, FACP…QLLH, FRCV…RRIH, and FVCT…QRIH. A disordered region spans residues 502–553; sequence IHTGEKTVRRSRASLHPQARSVAGASSEGAPAKETEPTPASGPAAVSQPAEV.

It belongs to the krueppel C2H2-type zinc-finger protein family. In terms of tissue distribution, expressed at high levels in the spleen, thymus, and PBMC, at low levels in the prostate, ovary, small intestine, colon (mucosal lining), placenta, lung, and pancreas, and very weakly expressed in the liver and kidney.

It localises to the nucleus. May be involved in transcriptional regulation. May be involved in regulation of cell proliferation. The chain is Zinc finger protein 324A (ZNF324) from Homo sapiens (Human).